Consider the following 1195-residue polypeptide: Protein PIP82 (1195 aa).

A compositionally biased stretch (low complexity) spans 1–10; that stretch reads MSHQEQQFQH. Disordered regions lie at residues 1 to 55, 85 to 132, 291 to 471, 493 to 515, 544 to 567, 613 to 637, 702 to 771, 833 to 977, and 1060 to 1195; these read MSHQ…IGSS, KLRG…SQQF, NTFD…TANL, KVAK…GASG, QRNA…GHEP, EEDN…GIAT, MSPV…IVPK, SAGS…VKTS, and QITV…VVEI. A compositionally biased stretch (basic residues) spans 11–26; sequence YPHHQHHHHHHHHHIH. Residues 37 to 50 are compositionally biased toward basic and acidic residues; sequence RSSDLEPNRSRNTD. The span at 109 to 118 shows a compositional bias: low complexity; the sequence is GSAKDGAGAA. The segment covering 119–132 has biased composition (polar residues); that stretch reads QQTHLQVAGQSQQF. Basic and acidic residues predominate over residues 300-313; that stretch reads HEQFERGKISHETD. The span at 351–360 shows a compositional bias: low complexity; it reads QQAAAEESPQ. The span at 361-371 shows a compositional bias: pro residues; the sequence is ANPPPPPPPRP. Residues 400–450 are phospho-regulated basic and hydrophobic (PRBH) motif; it reads ETTKTAENADENNASRKLSIRQNIKRLRKSIKRPSKIKSKAAAPVPDSDEE. Over residues 422–438 the composition is skewed to basic residues; it reads NIKRLRKSIKRPSKIKS. A compositionally biased stretch (basic and acidic residues) spans 494 to 505; it reads VAKEPEELETKA. Residues 545-560 show a composition bias toward polar residues; that stretch reads RNANNQNATTSKQPKP. 2 stretches are compositionally biased toward polar residues: residues 732 to 742 and 856 to 867; these read SGPQKSMSYSP and RVQSPQIGNSRE. The segment covering 872 to 891 has biased composition (acidic residues); the sequence is QEEEDKEAERDSEEEEEERD. Pro residues-rich tracts occupy residues 898–910 and 925–939; these read SESP…PQRR and VPPP…PPPS. Residues 940 to 968 show a composition bias toward low complexity; sequence VETIPSVASLPSPAPVTRSMAQRSASMSR. A compositionally biased stretch (polar residues) spans 1075–1085; it reads QSDQSDQSAHQ. Basic and acidic residues predominate over residues 1086–1095; that stretch reads EITDTRKTKS. Positions 1102-1111 are enriched in polar residues; sequence RQNSNCSRSE. 2 stretches are compositionally biased toward low complexity: residues 1114-1149 and 1179-1195; these read SPLS…QNPS and SYYS…VVEI.

In terms of processing, phosphorylated by aPKC which lowers lipid affinity and promotes dissociation from the cell cortex. In the photoreceptor cells, aPKC-mediated phosphorylation leads to its displacement from the stalk apical cortex and thus restricts its localization to the rhabdomeric apical cortex where it functions. Dephosphorylation appears to be light-dependent. As to expression, restricted to photoreceptor cells (at protein level). Not detected until approximately 48hrs after puparium formation (APF) and then maintained in the photoreceptor cells post-eclosion (at protein level).

The protein localises to the cytoplasm. It is found in the cell cortex. The protein resides in the cytosol. Its subcellular location is the cell projection. It localises to the rhabdomere. Its function is as follows. Required for the morphological differentiation and maintenance of the rhabdomeric photoreceptor apical domain. Acts as a downstream component of the gl and Pph13 transcriptional pathway which is required for photoreceptor cell development. Likely to function by regulating the trafficking or retention of rhabdomeric proteins including the phototransduction proteins ninaE and didum. The polypeptide is Protein PIP82 (Drosophila melanogaster (Fruit fly)).